The primary structure comprises 423 residues: Histidine--tRNA ligase (423 aa).

Belongs to the class-II aminoacyl-tRNA synthetase family. As to quaternary structure, homodimer.

The protein localises to the cytoplasm. The catalysed reaction is tRNA(His) + L-histidine + ATP = L-histidyl-tRNA(His) + AMP + diphosphate + H(+). In Orientia tsutsugamushi (strain Boryong) (Rickettsia tsutsugamushi), this protein is Histidine--tRNA ligase.